Consider the following 425-residue polypeptide: Dipeptidase tcpJ (425 aa).

Zn(2+) contacts are provided by H46, D48, and E158. Substrate contacts are provided by H185, R259, and D318.

Belongs to the metallo-dependent hydrolases superfamily. Peptidase M19 family. Zn(2+) is required as a cofactor.

It catalyses the reaction an L-aminoacyl-L-amino acid + H2O = 2 an L-alpha-amino acid. Functionally, dipeptidase; part of the gene cluster that mediates the biosynthesis of an unusual class of epipolythiodioxopiperazines (ETPs) lacking the reactive thiol group important for toxicity. Firstly, L-tyrosine is prenylated by tcpD, before undergoing condensation with L-glycine in a reaction catalyzed by the NRPS tcpP leading to the diketopiperazine (DKP) backbone. Afterwards the alpha-carbon of tyrosine is oxidized by the cytochrome P450 tcpC to form a hydroxyl group. However, in contrast other ETP biosynthesis pathways studied so far, tcpC is not able to bishydroxylate the DKP at both alpha-carbon positions, but hydroxylates the alpha-carbon of the tyrosine part and the nitrogen of the glycine part. The next steps involve an alpha,beta-elimination reaction catalyzed by tcpI, a methylation by the methyltransferase tcpN the action of the four enzyme cascade tcpG/K/J/I. Due to a dysfunctional cytochrome P450 monooxygenase tcpC, the pathway leads to the biosynthesis of probable non-toxic metabolites lacking the reactive thiol group. The chain is Dipeptidase tcpJ from Claviceps purpurea (strain 20.1) (Ergot fungus).